Here is a 688-residue protein sequence, read N- to C-terminus: Translation initiation factor IF-2 (688 aa).

Basic and acidic residues-rich tracts occupy residues 53–62 and 86–95; these read GKEKSEKTKE and KRDDKNEKVN. Residues 53-100 are disordered; the sequence is GKEKSEKTKEEDDEIETTAKNPIKESMNNKKSNKRDDKNEKVNTENAE. The tr-type G domain occupies 187–354; the sequence is KRSPIITVMG…MILLSSEILE (168 aa). Residues 196–203 form a G1 region; it reads GHVDHGKT. A GTP-binding site is contributed by 196–203; the sequence is GHVDHGKT. The segment at 221–225 is G2; sequence GITQH. The tract at residues 242-245 is G3; it reads DTPG. Residues 242–246 and 296–299 each bind GTP; these read DTPGH and NKID. The segment at 296–299 is G4; sequence NKID. The interval 332–334 is G5; that stretch reads SAH.

This sequence belongs to the TRAFAC class translation factor GTPase superfamily. Classic translation factor GTPase family. IF-2 subfamily.

The protein resides in the cytoplasm. One of the essential components for the initiation of protein synthesis. Protects formylmethionyl-tRNA from spontaneous hydrolysis and promotes its binding to the 30S ribosomal subunits. Also involved in the hydrolysis of GTP during the formation of the 70S ribosomal complex. The protein is Translation initiation factor IF-2 of Clostridium botulinum (strain ATCC 19397 / Type A).